The primary structure comprises 136 residues: Large ribosomal subunit protein uL16c (136 aa).

Positions 1-20 are disordered; sequence MLSPKRTKFRKQHRGRMKGK.

Belongs to the universal ribosomal protein uL16 family. As to quaternary structure, part of the 50S ribosomal subunit.

The protein resides in the plastid. It localises to the chloroplast. The protein is Large ribosomal subunit protein uL16c of Brachypodium distachyon (Purple false brome).